Reading from the N-terminus, the 776-residue chain is Ion-translocating oxidoreductase complex subunit C (776 aa).

4Fe-4S ferredoxin-type domains follow at residues 368–397 and 407–436; these read MGAP…QQLY and KATA…VQYF. Positions 377, 380, 383, 387, 416, 419, 422, and 426 each coordinate [4Fe-4S] cluster. Composition is skewed to basic and acidic residues over residues 534-543, 597-611, 633-647, 669-683, and 705-719; these read ARARQAEKVQ, ADEK…RKAA, and ADEK…RKAT. A disordered region spans residues 534–754; the sequence is ARARQAEKVQ…ENEAEDPRKA (221 aa). Over residues 721–743 the composition is skewed to low complexity; the sequence is EAAIARAKARKAAQAGERAQAAN.

Belongs to the 4Fe4S bacterial-type ferredoxin family. RnfC subfamily. In terms of assembly, the complex is composed of six subunits: RnfA, RnfB, RnfC, RnfD, RnfE and RnfG. [4Fe-4S] cluster serves as cofactor.

It is found in the cell inner membrane. In terms of biological role, part of a membrane-bound complex that couples electron transfer with translocation of ions across the membrane. The chain is Ion-translocating oxidoreductase complex subunit C from Cronobacter sakazakii (strain ATCC BAA-894) (Enterobacter sakazakii).